We begin with the raw amino-acid sequence, 442 residues long: MEQPNTKPVAPATSRNAALFERAQKLIPGGVNSPVRAFKAVGGTPRFIQRAQGAYFWDADGQRYIDYIGSWGPMILGHGHPAVVEAVQKAVLEGFSYGAPTEREVELAEEIVKLVPSIEMVRLVSSGTEATMSVIRLARGATGRSKIIKFEGCYHGHSDALLVKAGSGLATFGSPTSAGVPPEVVQHTLVLEYNHIAQLEEAFSLHGRDIACLMIEPIAGNMNFVRASVPFIKRCRELCTQYDALLVFDEVMTGFRVALGGAQSVYAQSIPGFKPDITALGKVIGGGMPMAAFGGTRAVMEHLAPLGGVYQAGTLSGNPVATACGLATLREIQKPGFYDALGARTRSLVEGLTHAANQAGVPFCGDSEGGMFGFFLLGTLPQNYPQVMKTDSPTFNRFFHAMLDSGVYYAPALYEAGFVSAAHTAEDIEATVEAATRFFAGR.

Lysine 282 is subject to N6-(pyridoxal phosphate)lysine.

It belongs to the class-III pyridoxal-phosphate-dependent aminotransferase family. HemL subfamily. As to quaternary structure, homodimer. Pyridoxal 5'-phosphate is required as a cofactor.

It is found in the cytoplasm. The catalysed reaction is (S)-4-amino-5-oxopentanoate = 5-aminolevulinate. It functions in the pathway porphyrin-containing compound metabolism; protoporphyrin-IX biosynthesis; 5-aminolevulinate from L-glutamyl-tRNA(Glu): step 2/2. The chain is Glutamate-1-semialdehyde 2,1-aminomutase from Polaromonas naphthalenivorans (strain CJ2).